The following is a 295-amino-acid chain: Small ribosomal subunit protein uS2 (295 aa).

This sequence belongs to the universal ribosomal protein uS2 family. In terms of assembly, component of the small ribosomal subunit. Mature ribosomes consist of a small (40S) and a large (60S) subunit. The 40S subunit contains about 33 different proteins and 1 molecule of RNA (18S). The 60S subunit contains about 49 different proteins and 3 molecules of RNA (25S, 5.8S and 5S). Interacts with RPS21.

The protein resides in the cytoplasm. In terms of biological role, required for the assembly and/or stability of the 40S ribosomal subunit. Required for the processing of the 20S rRNA-precursor to mature 18S rRNA in a late step of the maturation of 40S ribosomal subunits. In Paracoccidioides brasiliensis (strain Pb03), this protein is Small ribosomal subunit protein uS2.